Consider the following 273-residue polypeptide: Glutamate racemase (273 aa).

Substrate contacts are provided by residues Asp-10–Ser-11 and Tyr-42–Gly-43. The active-site Proton donor/acceptor is the Cys-73. Substrate is bound at residue Asn-74–Thr-75. Cys-184 acts as the Proton donor/acceptor in catalysis. Position 185-186 (Thr-185–His-186) interacts with substrate.

The protein belongs to the aspartate/glutamate racemases family.

It carries out the reaction L-glutamate = D-glutamate. Its pathway is cell wall biogenesis; peptidoglycan biosynthesis. Its function is as follows. Provides the (R)-glutamate required for cell wall biosynthesis. This is Glutamate racemase from Desulforudis audaxviator (strain MP104C).